Consider the following 64-residue polypeptide: DNA gyrase inhibitor YacG (64 aa).

Positions 10, 13, 29, and 33 each coordinate Zn(2+).

It belongs to the DNA gyrase inhibitor YacG family. As to quaternary structure, interacts with GyrB. Zn(2+) serves as cofactor.

In terms of biological role, inhibits all the catalytic activities of DNA gyrase by preventing its interaction with DNA. Acts by binding directly to the C-terminal domain of GyrB, which probably disrupts DNA binding by the gyrase. This chain is DNA gyrase inhibitor YacG, found in Pectobacterium atrosepticum (strain SCRI 1043 / ATCC BAA-672) (Erwinia carotovora subsp. atroseptica).